A 229-amino-acid chain; its full sequence is Ribonuclease 3 (229 aa).

Residues 4-133 (WEELQESVGF…FIGALYLDNG (130 aa)) enclose the RNase III domain. Glu-46 serves as a coordination point for Mg(2+). Asp-50 is an active-site residue. Positions 119 and 122 each coordinate Mg(2+). Glu-122 is a catalytic residue. The region spanning 159–228 (DYKTQLQEIV…AQFAINQLTH (70 aa)) is the DRBM domain.

This sequence belongs to the ribonuclease III family. Homodimer. It depends on Mg(2+) as a cofactor.

The protein resides in the cytoplasm. It carries out the reaction Endonucleolytic cleavage to 5'-phosphomonoester.. Functionally, digests double-stranded RNA. Involved in the processing of primary rRNA transcript to yield the immediate precursors to the large and small rRNAs (23S and 16S). Processes some mRNAs, and tRNAs when they are encoded in the rRNA operon. Processes pre-crRNA and tracrRNA of type II CRISPR loci if present in the organism. This is Ribonuclease 3 from Listeria monocytogenes serotype 4a (strain HCC23).